A 275-amino-acid chain; its full sequence is uncharacterized protein (275 aa).

The protein belongs to the MtfA family.

This is an uncharacterized protein from Synechocystis sp. (strain ATCC 27184 / PCC 6803 / Kazusa).